The sequence spans 86 residues: MNYFILLVVVCLLTAGTEGKKDGYPVEYDNCAYICWNYDNAYCDKLCKDKKADSGYCYWVHILCYCYGLPDSEPTKTNGKCKSGKK.

The N-terminal stretch at 1–19 is a signal peptide; it reads MNYFILLVVVCLLTAGTEG. Positions 21-82 constitute an LCN-type CS-alpha/beta domain; that stretch reads KDGYPVEYDN…EPTKTNGKCK (62 aa). Cystine bridges form between Cys31–Cys81, Cys35–Cys57, Cys43–Cys64, and Cys47–Cys66. Ser83 carries the serine amide modification.

Expressed by the venom gland.

The protein localises to the secreted. In terms of biological role, alpha toxins bind voltage-independently at site-3 of sodium channels (Nav) and inhibit the inactivation of the activated channels, thereby blocking neuronal transmission. This synthetic toxin inhibits inactivation of rat Nav1.4/SCN4A (when tested at 201 nM). In addition, it has been shown to cause a persistent sodium channel activation in nitrergic inhibitory fibers innervating the rabbit corpus cavernosum, resulting in NO release and cavernosal smooth muscle relaxation. This toxin is active against mammals. This synthetic peptide with a Ser at position 31 (C12S) acts as a bradykinin-potentiating peptide (BPP). Induces endothelium-dependent vasodilation that is reverted by NO synthase inhibitor, suggesting it activates molecular targets on vascular endothelium leading to NO production and vasodilation. It appears to induce vasodilation through muscarinic acetylcholine receptors (AChR) M2 (CHRM2) and M3 (CHRM3). Does not inhibit the angiotensin-converting enzyme (ACE). Does not act via bradykinin B2 receptor. The sequence is that of Alpha-mammal toxin Ts3 from Tityus serrulatus (Brazilian scorpion).